The chain runs to 115 residues: Large ribosomal subunit protein bL19 (115 aa).

The protein belongs to the bacterial ribosomal protein bL19 family.

This protein is located at the 30S-50S ribosomal subunit interface and may play a role in the structure and function of the aminoacyl-tRNA binding site. The chain is Large ribosomal subunit protein bL19 from Lawsonia intracellularis (strain PHE/MN1-00).